Consider the following 111-residue polypeptide: Cytochrome c (111 aa).

At Ala1 the chain carries N-acetylalanine. Positions 22, 25, and 26 each coordinate heme c. Lys80 is modified (N6,N6,N6-trimethyllysine). Position 88 (Met88) interacts with heme c. Position 94 is an N6,N6,N6-trimethyllysine (Lys94).

This sequence belongs to the cytochrome c family. Binds 1 heme c group covalently per subunit.

The protein resides in the mitochondrion intermembrane space. Electron carrier protein. The oxidized form of the cytochrome c heme group can accept an electron from the heme group of the cytochrome c1 subunit of cytochrome reductase. Cytochrome c then transfers this electron to the cytochrome oxidase complex, the final protein carrier in the mitochondrial electron-transport chain. The chain is Cytochrome c from Gossypium barbadense (Sea Island cotton).